The primary structure comprises 851 residues: Molybdenum cofactor sulfurase (851 aa).

K249 carries the post-translational modification N6-(pyridoxal phosphate)lysine. C413 is a catalytic residue. Residues 665-844 (QYLRKFVMPG…LMVGDIVTPS (180 aa)) form the MOSC domain.

Belongs to the class-V pyridoxal-phosphate-dependent aminotransferase family. MOCOS subfamily. The cofactor is pyridoxal 5'-phosphate.

It catalyses the reaction Mo-molybdopterin + L-cysteine + AH2 = thio-Mo-molybdopterin + L-alanine + A + H2O. Its pathway is cofactor biosynthesis; molybdopterin biosynthesis. Its function is as follows. Sulfurates the molybdenum cofactor. Sulfation of molybdenum is essential for xanthine dehydrogenase (XDH) and aldehyde oxidase (ADO) enzymes in which molybdenum cofactor is liganded by 1 oxygen and 1 sulfur atom in active form. The chain is Molybdenum cofactor sulfurase from Neosartorya fischeri (strain ATCC 1020 / DSM 3700 / CBS 544.65 / FGSC A1164 / JCM 1740 / NRRL 181 / WB 181) (Aspergillus fischerianus).